We begin with the raw amino-acid sequence, 580 residues long: Trafficking protein particle complex subunit 14 (580 aa).

2 disordered regions span residues 90-138 and 480-533; these read GMPG…ATTL and VSHP…RSGS. Residues 105–116 show a composition bias toward gly residues; it reads PGGGDPGGGGLF. Over residues 124–137 the composition is skewed to low complexity; the sequence is THGPGPATSGGATT. Residue serine 491 is modified to Phosphoserine. Low complexity predominate over residues 492–502; it reads RKSSPSSPAVR. A compositionally biased stretch (polar residues) spans 512–525; it reads LGRSQSFSHQQPSR. Serine 517 bears the Phosphoserine mark. Position 541 is a phosphothreonine (threonine 541). Serine 546 carries the phosphoserine modification.

As to quaternary structure, component of the multisubunit TRAPP II complex, which includes at least TRAPPC1, TRAPPC2, TRAPPC2L, TRAPPC3, TRAPPC4, TRAPPC5, TRAPPC6A/B, TRAPPC9, TRAPPC10 and TRAPPC14. TRAPPC9, TRAPPC10 and TRAPPC14 are specific subunits of the TRAPP II complex. Interacts with alpha-tubulin during mitosis. Interacts with RAB3IP (via the N-terminal region); this interaction mediates RAB3IP association with the TRAPP II complex. Interacts with TRAPPC10. Interacts with FBF1. Broadly expressed. High levels in brain, cerebellum, testis and whole blood.

The protein localises to the cytoplasm. The protein resides in the cytoskeleton. It localises to the spindle. It is found in the vesicle. Its subcellular location is the midbody. Functionally, specific subunit of the TRAPP (transport protein particle) II complex, a highly conserved vesicle tethering complex that functions in late Golgi trafficking as a membrane tether. TRAPP II complex also has GEF activity toward RAB1A. TRAPPC14 is dispensable for TRAPPII complex integrity but mediates RAB3IP preciliary vesicle trafficking to the mother centriole during ciliogenesis. Modulates YAP1 activity as transcriptional regulator. The polypeptide is Trafficking protein particle complex subunit 14 (Homo sapiens (Human)).